A 519-amino-acid polypeptide reads, in one-letter code: FAD-dependent monooxygenase macF (519 aa).

Positions 1–20 are cleaved as a signal peptide; it reads MTKMTSIIGILMGVLTTATA. Residues 88-262 enclose the FAD-binding PCMH-type domain; sequence CRLNASCIVT…TEYDLTTNTG (175 aa). His125 is modified (pros-8alpha-FAD histidine).

Belongs to the oxygen-dependent FAD-linked oxidoreductase family.

Its pathway is secondary metabolite biosynthesis; terpenoid biosynthesis. In terms of biological role, FAD-dependent monooxygenase; part of the gene cluster that mediates the biosynthesis of macrophorins, isoprenoid epoxycyclohexenones containing cyclized drimane moieties. The first step of the pathway is the synthesis of 6-methylsalicylic acid (6-MSA) by the polyketide synthase macA. 6-MSA is then converted to m-cresol by the decarboxylase macB. The cytochrome P450 monooxygenase macC then catalyzes the oxidation of m-cresol to toluquinol. Epoxidation of toluquinol is then performed by the short chain dehydrogenase macD, with the help of macE, and a further prenylation by macG leads to 7-deacetoxyyanuthone A. The next step is the hydroxylation of C-22 of 7-deacetoxyyanuthone A by the cytochrome P450 monooxygenase macH to yield 22-deacetylyanuthone A. O-Mevalon transferase macI then attaches mevalon to the hydroxyl group of 22-deacetylyanuthone A to produce yanuthone E. The terpene cyclase macJ catalyzes the cyclization of 22-deacetylyanuthone A to macrophorin A. MacJ is also able to catalyze cyclization of yanuthone E and 7-deacetoxyyanuthone A to their corresponding macrophorins. The macJ products can be further modified by macH and macJ, as well as by the FAD-dependent monooxygenase macF, to produce additional macrophorins, including 4'-oxomacrophorin A, 4'-oxomacrophorin D and 4'-oxomacrophorin E. This is FAD-dependent monooxygenase macF from Penicillium terrestre.